The primary structure comprises 34 residues: Photosystem II reaction center protein M (34 aa).

A helical membrane pass occupies residues 5 to 25 (ILAFIATALFILIPTAFLLII).

Belongs to the PsbM family. In terms of assembly, PSII is composed of 1 copy each of membrane proteins PsbA, PsbB, PsbC, PsbD, PsbE, PsbF, PsbH, PsbI, PsbJ, PsbK, PsbL, PsbM, PsbT, PsbX, PsbY, PsbZ, Psb30/Ycf12, at least 3 peripheral proteins of the oxygen-evolving complex and a large number of cofactors. It forms dimeric complexes.

Its subcellular location is the plastid. The protein localises to the chloroplast thylakoid membrane. In terms of biological role, one of the components of the core complex of photosystem II (PSII). PSII is a light-driven water:plastoquinone oxidoreductase that uses light energy to abstract electrons from H(2)O, generating O(2) and a proton gradient subsequently used for ATP formation. It consists of a core antenna complex that captures photons, and an electron transfer chain that converts photonic excitation into a charge separation. This subunit is found at the monomer-monomer interface. This is Photosystem II reaction center protein M from Lolium perenne (Perennial ryegrass).